The chain runs to 415 residues: Dynein assembly factor with WD repeat domains 1 (415 aa).

WD repeat units lie at residues 90-129 (AHIL…ELHT), 132-174 (GHRN…HTFR), 175-214 (GHTA…EALT), 217-256 (GHAA…RIHT), 259-298 (GHRG…CVAT), 301-340 (GHDD…CLAK), 343-384 (GHEG…QVLK), and 386-415 (HTDE…RIWR).

It belongs to the WD repeat WDR69 family.

It is found in the cytoplasm. It localises to the cytoskeleton. Its subcellular location is the flagellum basal body. The protein localises to the flagellum axoneme. In terms of biological role, required for axonemal dynein assembly and ciliary motility in ciliated organs, including Kupffer's vesicle, during embryogenesis. Facilitates the onset of robust cilia motility during development. In Xenopus laevis (African clawed frog), this protein is Dynein assembly factor with WD repeat domains 1 (daw1).